Reading from the N-terminus, the 378-residue chain is Mating-type protein MAT-1 (378 aa).

The alpha box DNA-binding region spans 60 to 117; it reads KARKALNAFVGFRCYYITIPMFKPWPMKKLSNLIGLLWEADPNKSLWSLMAKPWSTIR.

Belongs to the MATALPHA1 family.

Its subcellular location is the nucleus. Mating type proteins are sequence specific DNA-binding proteins that act as master switches in fungal differentiation by controlling gene expression in a cell type-specific fashion. Transcriptional activator that induces the transcription of alpha-specific genes. This chain is Mating-type protein MAT-1 (MAT1), found in Cochliobolus sativus (Common root rot and spot blotch fungus).